The following is a 374-amino-acid chain: Spore germination protein B3 (374 aa).

The first 19 residues, 1 to 19, serve as a signal peptide directing secretion; sequence MKTASKFSVMFFMLLALCG. A lipid anchor (N-palmitoyl cysteine) is attached at Cys20. Cys20 is lipidated: S-diacylglycerol cysteine.

Belongs to the GerABKC lipoprotein family.

It is found in the cell membrane. In terms of biological role, involved in the response to the germinative mixture of L-asparagine, glucose, fructose and potassium ions (AGFK). Cannot stimulate germination in the absence of gerD and gerK gene products (fructose and glucose receptors respectively). The protein is Spore germination protein B3 (gerBC) of Bacillus subtilis (strain 168).